Consider the following 358-residue polypeptide: Peptide chain release factor 1 (358 aa).

An N5-methylglutamine modification is found at Q235. A disordered region spans residues 284 to 309 (KVESERSASRKSQVGSGDRSERIRTY).

Belongs to the prokaryotic/mitochondrial release factor family. In terms of processing, methylated by PrmC. Methylation increases the termination efficiency of RF1.

The protein localises to the cytoplasm. Peptide chain release factor 1 directs the termination of translation in response to the peptide chain termination codons UAG and UAA. The polypeptide is Peptide chain release factor 1 (Bartonella tribocorum (strain CIP 105476 / IBS 506)).